The chain runs to 936 residues: Translation initiation factor IF-2 (936 aa).

The segment at 102–332 (PEPGPVLKKD…SGSRQKFRKM (231 aa)) is disordered. Over residues 108–119 (LKKDHVHEEPEK) the composition is skewed to basic and acidic residues. Acidic residues predominate over residues 127–137 (SEPEVEPEVEP). A compositionally biased stretch (low complexity) spans 151–160 (PTEAVSVPEP). Residues 182–194 (QSSTMKAQASPEM) are compositionally biased toward polar residues. Composition is skewed to basic and acidic residues over residues 217–227 (SALDRGSESDR) and 237–267 (KEQA…EAKT). Positions 272 to 281 (KAAGTTGSAA) are enriched in low complexity. Residues 287–297 (SKKKKGGKKKK) are compositionally biased toward basic residues. The region spanning 433 to 603 (IRPPVVTIMG…LMEAEIRELK (171 aa)) is the tr-type G domain. A G1 region spans residues 442-449 (GHVDHGKT). 442–449 (GHVDHGKT) lines the GTP pocket. Positions 467–471 (GITQH) are G2. A G3 region spans residues 489–492 (DTPG). GTP-binding positions include 489–493 (DTPGH) and 543–546 (NKID). The segment at 543-546 (NKID) is G4. The segment at 579–581 (SAK) is G5.

This sequence belongs to the TRAFAC class translation factor GTPase superfamily. Classic translation factor GTPase family. IF-2 subfamily.

The protein resides in the cytoplasm. One of the essential components for the initiation of protein synthesis. Protects formylmethionyl-tRNA from spontaneous hydrolysis and promotes its binding to the 30S ribosomal subunits. Also involved in the hydrolysis of GTP during the formation of the 70S ribosomal complex. This chain is Translation initiation factor IF-2, found in Prosthecochloris aestuarii (strain DSM 271 / SK 413).